Here is a 161-residue protein sequence, read N- to C-terminus: Nucleotide-binding protein Shew_2893 (161 aa).

Belongs to the YajQ family.

Functionally, nucleotide-binding protein. This is Nucleotide-binding protein Shew_2893 from Shewanella loihica (strain ATCC BAA-1088 / PV-4).